The following is a 551-amino-acid chain: Chaperonin GroEL (551 aa).

Residues 30 to 33 (TLGP), Lys51, 87 to 91 (DGTTT), Gly415, 478 to 480 (NAA), and Asp494 each bind ATP.

The protein belongs to the chaperonin (HSP60) family. As to quaternary structure, forms a cylinder of 14 subunits composed of two heptameric rings stacked back-to-back. Interacts with the co-chaperonin GroES.

Its subcellular location is the cytoplasm. It carries out the reaction ATP + H2O + a folded polypeptide = ADP + phosphate + an unfolded polypeptide.. In terms of biological role, together with its co-chaperonin GroES, plays an essential role in assisting protein folding. The GroEL-GroES system forms a nano-cage that allows encapsulation of the non-native substrate proteins and provides a physical environment optimized to promote and accelerate protein folding. The sequence is that of Chaperonin GroEL from Syntrophotalea carbinolica (strain DSM 2380 / NBRC 103641 / GraBd1) (Pelobacter carbinolicus).